Consider the following 318-residue polypeptide: Ribosomal RNA small subunit methyltransferase H (318 aa).

Residues 42 to 44 (GGH), Asp62, Phe86, Asp108, and Gln115 contribute to the S-adenosyl-L-methionine site.

It belongs to the methyltransferase superfamily. RsmH family.

It is found in the cytoplasm. The enzyme catalyses cytidine(1402) in 16S rRNA + S-adenosyl-L-methionine = N(4)-methylcytidine(1402) in 16S rRNA + S-adenosyl-L-homocysteine + H(+). Functionally, specifically methylates the N4 position of cytidine in position 1402 (C1402) of 16S rRNA. The protein is Ribosomal RNA small subunit methyltransferase H of Yersinia pestis (strain Pestoides F).